Reading from the N-terminus, the 653-residue chain is 4-alpha-glucanotransferase (653 aa).

Glutamate 123 (nucleophile) is an active-site residue. Catalysis depends on aspartate 214, which acts as the Proton donor.

Belongs to the glycosyl hydrolase 57 family.

The catalysed reaction is Transfers a segment of a (1-&gt;4)-alpha-D-glucan to a new position in an acceptor, which may be glucose or a (1-&gt;4)-alpha-D-glucan.. The chain is 4-alpha-glucanotransferase from Thermococcus kodakarensis (strain ATCC BAA-918 / JCM 12380 / KOD1) (Pyrococcus kodakaraensis (strain KOD1)).